A 1420-amino-acid chain; its full sequence is Apolipoprotein(a) (1420 aa).

Positions 19–30 are enriched in low complexity; it reads TAVAPPNVTPVP. Residues 19 to 46 form a disordered region; the sequence is TAVAPPNVTPVPSLEAPSEQAPTEQRPG. Kringle domains are found at residues 49-127, 163-241, 277-355, 391-469, and 505-583; these read ECYH…LTQC, ECYH…LTRC, and ECYY…LTQC. Disulfide bonds link cysteine 50–cysteine 127, cysteine 71–cysteine 110, cysteine 99–cysteine 122, cysteine 164–cysteine 241, cysteine 185–cysteine 224, cysteine 213–cysteine 236, cysteine 278–cysteine 355, cysteine 299–cysteine 338, cysteine 327–cysteine 350, cysteine 392–cysteine 469, cysteine 413–cysteine 452, cysteine 441–cysteine 464, cysteine 506–cysteine 583, cysteine 527–cysteine 566, and cysteine 555–cysteine 578. The segment at 598 to 617 is disordered; that stretch reads PDPSTQASSEEAPTEQSPEV. Positions 600–616 are enriched in polar residues; the sequence is PSTQASSEEAPTEQSPE. 5 Kringle domains span residues 619–697, 725–803, 839–917, 953–1031, and 1067–1145; these read DCYH…LTQC, DCYQ…LTQC, and QCYH…LTRC. 19 disulfides stabilise this stretch: cysteine 620/cysteine 697, cysteine 641/cysteine 680, cysteine 669/cysteine 692, cysteine 726/cysteine 803, cysteine 747/cysteine 786, cysteine 775/cysteine 798, cysteine 840/cysteine 917, cysteine 861/cysteine 900, cysteine 889/cysteine 912, cysteine 954/cysteine 1031, cysteine 975/cysteine 1014, cysteine 1003/cysteine 1026, cysteine 1068/cysteine 1145, cysteine 1089/cysteine 1128, cysteine 1117/cysteine 1140, cysteine 1217/cysteine 1233, cysteine 1309/cysteine 1376, cysteine 1339/cysteine 1355, and cysteine 1366/cysteine 1394. Residues 1191–1418 form the Peptidase S1 domain; it reads IVGGCVAHPH…FVTWIEGVMR (228 aa).

This sequence belongs to the peptidase S1 family. Plasminogen subfamily. Disulfide-linked to apo-B100. Binds to fibronectin and decorin. N- and O-glycosylated.

In terms of biological role, apo(a) is the main constituent of lipoprotein(a) (Lp(a)). It has serine proteinase activity and is able of autoproteolysis. Inhibits tissue-type plasminogen activator 1. Lp(a) may be a ligand for megalin/Gp 330. The protein is Apolipoprotein(a) (LPA) of Macaca mulatta (Rhesus macaque).